The sequence spans 445 residues: Histone acetyltransferase of the MYST family 1 (445 aa).

The region spanning 60-118 is the Tudor-knot domain; sequence LEVGTRVMCQWRDGKYHPVKVIERRKNYNGGHNDYEYYVHYTEFNRRLDEWIKLEQLDL. Residues 169–440 enclose the MYST-type HAT domain; it reads TKVKNIATIE…VDVSKMIWTP (272 aa). The C2HC MYST-type zinc-finger motif lies at 202-227; sequence LFFCEFCLSFMKRKEQLQRHMRKCDL. Lys-269 carries the post-translational modification N6-acetyllysine; by autocatalysis. Acetyl-CoA is bound by residues 312 to 314 and 319 to 325; these read ILT and QRKGYGK. Glu-345 acts as the Proton donor/acceptor in catalysis. Ser-349 lines the acetyl-CoA pocket.

Belongs to the MYST (SAS/MOZ) family. In terms of assembly, interacts with MRG1 and MRG2. Component of the NuA4 histone acetyltransferase complex. Autoacetylation at Lys-269 is required for proper function. Expressed in cotyledons, leaves, stems, roots and, at higher levels in developing flowers, particularly in the anthers and gynoecia. Constitutively expressed in all tissues, predominantly in shoot apical meristem.

The protein localises to the nucleus. The enzyme catalyses L-lysyl-[protein] + acetyl-CoA = N(6)-acetyl-L-lysyl-[protein] + CoA + H(+). Functionally, histone acetyltransferase which may be involved in transcriptional activation. Acetylates 'Lys-5' of histone H4 (H4K5ac). Essential for gametophyte development. Involved in DNA repair after UV-B exposure. Negative regulator of flowering controlling the H4K5ac levels in the FLC chromatin. The protein is Histone acetyltransferase of the MYST family 1 of Arabidopsis thaliana (Mouse-ear cress).